A 319-amino-acid polypeptide reads, in one-letter code: Acetyl esterase (319 aa).

Positions 91-93 (HGG) match the Involved in the stabilization of the negatively charged intermediate by the formation of the oxyanion hole motif. Residues S165, D262, and H292 contribute to the active site.

The protein belongs to the 'GDXG' lipolytic enzyme family. In terms of assembly, homodimer. Interacts with MalT and MelA.

It is found in the cytoplasm. In terms of biological role, displays esterase activity towards short chain fatty esters (acyl chain length of up to 8 carbons). Able to hydrolyze triacetylglycerol (triacetin) and tributyrylglycerol (tributyrin), but not trioleylglycerol (triolein) or cholesterol oleate. Negatively regulates MalT activity by antagonizing maltotriose binding. Inhibits MelA galactosidase activity. The polypeptide is Acetyl esterase (Escherichia coli O8 (strain IAI1)).